A 595-amino-acid chain; its full sequence is Zinc finger protein 467 (595 aa).

Residues 1-67 form a disordered region; that stretch reads MRETLEALSS…EEGAHTEQAE (67 aa). A Glycyl lysine isopeptide (Lys-Gly) (interchain with G-Cter in SUMO2) cross-link involves residue K97. 6 consecutive C2H2-type zinc fingers follow at residues 160-182, 188-210, 216-238, 244-266, 272-294, and 300-322; these read YGCG…QRLH, CACP…QRSH, FPCS…LRTH, YPCA…QKTH, FPCT…QRIH, and YQCA…QRVH. The disordered stretch occupies residues 313 to 350; it reads QHLVRHQRVHQTAGPARPSPDSSASPHSTAPSPTPSFP. Over residues 325–343 the composition is skewed to low complexity; the sequence is AGPARPSPDSSASPHSTAP. 6 consecutive C2H2-type zinc fingers follow at residues 355–377, 431–453, 459–481, 487–509, 515–537, and 543–565; these read FACS…QCLH, FFCP…PRVH, FACT…SRAH, FACA…QAVH, HACA…QAIH, and FSCP…QLIH. A Glycyl lysine isopeptide (Lys-Gly) (interchain with G-Cter in SUMO2) cross-link involves residue K368.

This sequence belongs to the krueppel C2H2-type zinc-finger protein family. As to quaternary structure, interacts with STAT3. Enhances STAT3 activity by keeping it in the nucleus.

The protein localises to the nucleus. Functionally, transcription factor that promotes adipocyte differentiation and suppresses osteoblast differentiation in the bone marrow. Enhances the osteoclast-supporting ability of stromal cells. Binds with STAT3 the consensus sequence 5'-CTTCTGGGAAGA-3' of the acute phase response element (APRE). Transactivates several promoters including FOS, OSM and PPARG. Recruits a histone deacetylase complex. The protein is Zinc finger protein 467 (ZNF467) of Homo sapiens (Human).